The following is a 222-amino-acid chain: MGKKAVCIISGGMDSALSAKIAQEEGYEIIALHFNYGQRTRNKELECFRKITQELNASESYEIDLDFFEQIGASALTDKSIDVPIGGLEEGVPVTYVPFRNGIFLSIAAAIAEKHGAEALFIGVVEEDSSGYPDCRESYIEQMQKAINLGTKDETNIEIKMPLVSLRKSQIVQKAIELGVPLEDTWSCYQAEDAACGVCDSCRLRLRGFEVAGVKDPIAYRK.

9–19 is a binding site for ATP; that stretch reads ISGGMDSALSA. Cysteine 188, cysteine 196, cysteine 199, and cysteine 202 together coordinate Zn(2+).

The protein belongs to the QueC family. The cofactor is Zn(2+).

The catalysed reaction is 7-carboxy-7-deazaguanine + NH4(+) + ATP = 7-cyano-7-deazaguanine + ADP + phosphate + H2O + H(+). It functions in the pathway purine metabolism; 7-cyano-7-deazaguanine biosynthesis. Functionally, catalyzes the ATP-dependent conversion of 7-carboxy-7-deazaguanine (CDG) to 7-cyano-7-deazaguanine (preQ(0)). This chain is 7-cyano-7-deazaguanine synthase, found in Sulfurovum sp. (strain NBC37-1).